The following is a 462-amino-acid chain: Glycoprotein endo-alpha-1,2-mannosidase (462 aa).

At 1–9 (MAKFRRRTC) the chain is on the cytoplasmic side. A helical; Signal-anchor for type II membrane protein membrane pass occupies residues 10-30 (ILLSLFILFIFSLMMGLKMLW). The Lumenal segment spans residues 31 to 462 (PNAASFGPPF…YALDQQQPAS (432 aa)). The tract at residues 60 to 462 (DFQRSDRINM…YALDQQQPAS (403 aa)) is catalytic.

The protein belongs to the glycosyl hydrolase 99 family. Undergoes proteolytic cleavage in the C-terminal region.

The protein resides in the golgi apparatus membrane. It carries out the reaction N-{alpha-Glc-(1-&gt;3)-alpha-Man-(1-&gt;2)-alpha-Man-(1-&gt;2)-alpha-Man-(1-&gt;3)-[alpha-Man-(1-&gt;2)-alpha-Man-(1-&gt;3)-[alpha-Man-(1-&gt;2)-alpha-Man-(1-&gt;6)]-alpha-Man-(1-&gt;6)]-beta-Man-(1-&gt;4)-beta-GlcNAc-(1-&gt;4)-beta-GlcNAc}-L-asparaginyl-[protein] + H2O = alpha-D-glucosyl-(1-&gt;3)-D-mannopyranose + N(4)-{alpha-D-Man-(1-&gt;2)-alpha-D-Man-(1-&gt;3)-[alpha-D-Man-(1-&gt;2)-alpha-D-Man-(1-&gt;3)-[alpha-D-Man-(1-&gt;2)-alpha-D-Man-(1-&gt;6)]-alpha-D-Man-(1-&gt;6)]-beta-D-Man-(1-&gt;4)-beta-D-GlaNAc-(1-&gt;4)-beta-D-GlcNAc}-L-asparaginyl-[protein] (N-glucan mannose isomer 8A1,2,3B1,2). This is Glycoprotein endo-alpha-1,2-mannosidase (Manea) from Mus musculus (Mouse).